Here is a 366-residue protein sequence, read N- to C-terminus: Cell division protein FtsZ 1 (366 aa).

GTP is bound by residues 45 to 49, 132 to 134, Glu-163, Arg-167, and Asp-210; these read GAGCN and GTG. Acidic residues predominate over residues 344-354; it reads PEEETPLETPE. The disordered stretch occupies residues 344–366; that stretch reads PEEETPLETPEESPSIEISIPEL. Residues 355 to 366 show a composition bias toward low complexity; sequence ESPSIEISIPEL.

This sequence belongs to the FtsZ family. In terms of assembly, homodimer. Polymerizes to form a dynamic ring structure in a strictly GTP-dependent manner. Interacts directly with several other division proteins.

The protein resides in the cytoplasm. In terms of biological role, essential cell division protein that forms a contractile ring structure (Z ring) at the future cell division site. The regulation of the ring assembly controls the timing and the location of cell division. One of the functions of the FtsZ ring is to recruit other cell division proteins to the septum to produce a new cell wall between the dividing cells. Binds GTP and shows GTPase activity. The chain is Cell division protein FtsZ 1 from Pyrococcus woesei.